A 144-amino-acid polypeptide reads, in one-letter code: Putative golgin subfamily A member 2B (144 aa).

2 disordered regions span residues 1 to 20 (MDSE…PEDL) and 95 to 132 (SCGR…EAAG). Residues 110–131 (AEGGGVHQQAGPGQGRGEGEAA) are compositionally biased toward gly residues.

It belongs to the GOLGA2 family.

This is Putative golgin subfamily A member 2B (GOLGA2P5) from Homo sapiens (Human).